A 475-amino-acid chain; its full sequence is Ribulose bisphosphate carboxylase large chain (475 aa).

A propeptide spanning residues 1 to 2 (MS) is cleaved from the precursor. N-acetylproline is present on proline 3. N6,N6,N6-trimethyllysine is present on lysine 14. Asparagine 123 and threonine 173 together coordinate substrate. Lysine 175 functions as the Proton acceptor in the catalytic mechanism. Residue lysine 177 coordinates substrate. Mg(2+)-binding residues include lysine 201, aspartate 203, and glutamate 204. Lysine 201 bears the N6-carboxylysine mark. Catalysis depends on histidine 294, which acts as the Proton acceptor. Residues arginine 295, histidine 327, and serine 379 each contribute to the substrate site.

It belongs to the RuBisCO large chain family. Type I subfamily. Heterohexadecamer of 8 large chains and 8 small chains; disulfide-linked. The disulfide link is formed within the large subunit homodimers. Mg(2+) is required as a cofactor. Post-translationally, the disulfide bond which can form in the large chain dimeric partners within the hexadecamer appears to be associated with oxidative stress and protein turnover.

The protein resides in the plastid. It localises to the chloroplast. The catalysed reaction is 2 (2R)-3-phosphoglycerate + 2 H(+) = D-ribulose 1,5-bisphosphate + CO2 + H2O. It catalyses the reaction D-ribulose 1,5-bisphosphate + O2 = 2-phosphoglycolate + (2R)-3-phosphoglycerate + 2 H(+). Functionally, ruBisCO catalyzes two reactions: the carboxylation of D-ribulose 1,5-bisphosphate, the primary event in carbon dioxide fixation, as well as the oxidative fragmentation of the pentose substrate in the photorespiration process. Both reactions occur simultaneously and in competition at the same active site. In Atriplex rosea (Red orache), this protein is Ribulose bisphosphate carboxylase large chain.